A 210-amino-acid polypeptide reads, in one-letter code: Imidazole glycerol phosphate synthase subunit HisH (210 aa).

The Glutamine amidotransferase type-1 domain occupies 1–210 (MIAILDYGMG…KLLENFIRFI (210 aa)). The active-site Nucleophile is the C79. Catalysis depends on residues H191 and E193.

In terms of assembly, heterodimer of HisH and HisF.

Its subcellular location is the cytoplasm. The catalysed reaction is 5-[(5-phospho-1-deoxy-D-ribulos-1-ylimino)methylamino]-1-(5-phospho-beta-D-ribosyl)imidazole-4-carboxamide + L-glutamine = D-erythro-1-(imidazol-4-yl)glycerol 3-phosphate + 5-amino-1-(5-phospho-beta-D-ribosyl)imidazole-4-carboxamide + L-glutamate + H(+). The enzyme catalyses L-glutamine + H2O = L-glutamate + NH4(+). Its pathway is amino-acid biosynthesis; L-histidine biosynthesis; L-histidine from 5-phospho-alpha-D-ribose 1-diphosphate: step 5/9. In terms of biological role, IGPS catalyzes the conversion of PRFAR and glutamine to IGP, AICAR and glutamate. The HisH subunit catalyzes the hydrolysis of glutamine to glutamate and ammonia as part of the synthesis of IGP and AICAR. The resulting ammonia molecule is channeled to the active site of HisF. The sequence is that of Imidazole glycerol phosphate synthase subunit HisH from Leptospira interrogans serogroup Icterohaemorrhagiae serovar copenhageni (strain Fiocruz L1-130).